A 408-amino-acid polypeptide reads, in one-letter code: MSWDQVWIDVNLATMDPSISAPYGAITNAAMAVKDGKIAWLGPRSELPAFDVLSIPVYRGKGGWITPGLIDAHTHLIFAGNRANEFELRLQGASYEEIARSGGGIISTVKACREADEAELFELGRQRLNALAKEGVTTVEIKSGYGLDTETELKILRVARELGKHHHVDVKTTFLGAHAIPPEYKDNSDGYVDLIINKMLPAVIAENLADAVDVFCENIAFNLEQTERVLSAAKAAGLEIKLHAEQLTNMGGSALAARLGAKSVDHIEYLDEAGVKALSESGTCAVLLPGAFYFLRETQKPPIDLLRQYGVPMVLASDFNPGSSPICSTLLMLNMGCTLFRLTPEEALKGLTLNAAKALGIEDNVGSLLVGKQADFCLWDIATPAQLAYSYGVNPCKDVVKNGKLVHQ.

The Fe(3+) site is built by H73 and H75. 2 residues coordinate Zn(2+): H73 and H75. 4-imidazolone-5-propanoate-binding residues include R82, Y145, and H178. Y145 provides a ligand contact to N-formimidoyl-L-glutamate. H243 lines the Fe(3+) pocket. Zn(2+) is bound at residue H243. Q246 serves as a coordination point for 4-imidazolone-5-propanoate. Fe(3+) is bound at residue D318. Residue D318 coordinates Zn(2+). N320 and G322 together coordinate N-formimidoyl-L-glutamate. Residue S323 coordinates 4-imidazolone-5-propanoate.

It belongs to the metallo-dependent hydrolases superfamily. HutI family. Requires Zn(2+) as cofactor. Fe(3+) serves as cofactor.

Its subcellular location is the cytoplasm. The catalysed reaction is 4-imidazolone-5-propanoate + H2O = N-formimidoyl-L-glutamate. Its pathway is amino-acid degradation; L-histidine degradation into L-glutamate; N-formimidoyl-L-glutamate from L-histidine: step 3/3. Its function is as follows. Catalyzes the hydrolytic cleavage of the carbon-nitrogen bond in imidazolone-5-propanoate to yield N-formimidoyl-L-glutamate. It is the third step in the universal histidine degradation pathway. This chain is Imidazolonepropionase, found in Shewanella baltica (strain OS195).